Reading from the N-terminus, the 254-residue chain is 2-dehydro-3-deoxy-D-gluconate 5-dehydrogenase (254 aa).

Tyr159 acts as the Proton acceptor in catalysis.

This sequence belongs to the short-chain dehydrogenases/reductases (SDR) family.

The catalysed reaction is 2-dehydro-3-deoxy-D-gluconate + NAD(+) = 3-deoxy-D-glycero-2,5-hexodiulosonate + NADH + H(+). Its function is as follows. Involved in the degradation of 3,6-anhydro-L-galactose, which is the major monomeric sugar of red macroalgae. Catalyzes the fourth step of the pathway, the reduction of 3-deoxy-D-glycero-2,5-hexodiulosonate (L-DDGal) to 2-dehydro-3-deoxy-D-gluconate (KDG). This is 2-dehydro-3-deoxy-D-gluconate 5-dehydrogenase from Pseudoalteromonas atlantica (strain T6c / ATCC BAA-1087).